The primary structure comprises 141 residues: HTH-type transcriptional repressor NsrR (141 aa).

Residues 2-129 form the HTH rrf2-type domain; the sequence is QLTSFTDYGL…DNYTLADLVE (128 aa). Positions 28–51 form a DNA-binding region, H-T-H motif; that stretch reads ISEVTDVYGVSRNHMVKIINQLSR. [2Fe-2S] cluster contacts are provided by Cys91, Cys96, and Cys102.

[2Fe-2S] cluster serves as cofactor.

In terms of biological role, nitric oxide-sensitive repressor of genes involved in protecting the cell against nitrosative stress. May require iron for activity. The polypeptide is HTH-type transcriptional repressor NsrR (Escherichia fergusonii (strain ATCC 35469 / DSM 13698 / CCUG 18766 / IAM 14443 / JCM 21226 / LMG 7866 / NBRC 102419 / NCTC 12128 / CDC 0568-73)).